The primary structure comprises 261 residues: Auxin-responsive protein IAA10 (261 aa).

The segment at Met-1–Thr-43 is disordered. Positions Leu-45–Leu-49 match the EAR-like (transcriptional repression) motif. Residues Leu-62–Thr-90 form a disordered region. Low complexity predominate over residues Asp-80 to Ala-89. The region spanning Ser-151–Thr-253 is the PB1 domain.

It belongs to the Aux/IAA family. In terms of assembly, homodimers and heterodimers. Preferentially expressed in vegetative organs.

The protein localises to the nucleus. In terms of biological role, aux/IAA proteins are short-lived transcriptional factors that function as repressors of early auxin response genes at low auxin concentrations. Repression is thought to result from the interaction with auxin response factors (ARFs), proteins that bind to the auxin-responsive promoter element (AuxRE). Formation of heterodimers with ARF proteins may alter their ability to modulate early auxin response genes expression. This chain is Auxin-responsive protein IAA10 (IAA10), found in Arabidopsis thaliana (Mouse-ear cress).